Consider the following 388-residue polypeptide: MNIHEYQGKEILRKYNVPVPRGIPAFSVDEALKAAEQLGGPVWVVKAQIHAGGRGKGGGVKVAKSMDEVKTYASNILGMQLVTHQTGPEGKKVNRLLIEEGADIKKELYVSLVVDRVSQKIALMASSEGGMDIEEVAAHTPEKIHTLIIEPSTGLTDADADDIARKIGVPDASVAQARQALQGLYKAFYETDASLAEINPLILTGDGKVIALDAKFNFDSNALFRHPEIVAYRDLDEEDANEIEASKFDLAYISLDGNIGCLVNGAGLAMATMDTIKLFGGEPANFLDVGGGATTEKVTEAFKLMLKNPNVQAILVNIFGGIMRCDVIAEGVISASKAVSLNVPLVVRMKGTNEELGRKMLADSGLPIISADTMEEAAQKVVAAAAGK.

Residues 9–244 (KEILRKYNVP…LDEEDANEIE (236 aa)) form the ATP-grasp domain. ATP contacts are provided by residues Lys-46, 53 to 55 (GRG), Glu-99, Ala-102, and Glu-107. Mg(2+) is bound by residues Asn-199 and Asp-213. Residues Asn-264 and 321-323 (GIM) each bind substrate.

Belongs to the succinate/malate CoA ligase beta subunit family. Heterotetramer of two alpha and two beta subunits. It depends on Mg(2+) as a cofactor.

It carries out the reaction succinate + ATP + CoA = succinyl-CoA + ADP + phosphate. The catalysed reaction is GTP + succinate + CoA = succinyl-CoA + GDP + phosphate. Its pathway is carbohydrate metabolism; tricarboxylic acid cycle; succinate from succinyl-CoA (ligase route): step 1/1. In terms of biological role, succinyl-CoA synthetase functions in the citric acid cycle (TCA), coupling the hydrolysis of succinyl-CoA to the synthesis of either ATP or GTP and thus represents the only step of substrate-level phosphorylation in the TCA. The beta subunit provides nucleotide specificity of the enzyme and binds the substrate succinate, while the binding sites for coenzyme A and phosphate are found in the alpha subunit. The sequence is that of Succinate--CoA ligase [ADP-forming] subunit beta from Cupriavidus taiwanensis (strain DSM 17343 / BCRC 17206 / CCUG 44338 / CIP 107171 / LMG 19424 / R1) (Ralstonia taiwanensis (strain LMG 19424)).